The sequence spans 260 residues: Carbonic anhydrase 2 (260 aa).

The region spanning 3–259 is the Alpha-carbonic anhydrase domain; the sequence is HGWGYADHNG…LKDRKVCASF (257 aa). The Proton donor/acceptor role is filled by histidine 64. Residues histidine 94, histidine 96, and histidine 119 each contribute to the Zn(2+) site. 198 to 199 lines the substrate pocket; that stretch reads TT.

The protein belongs to the alpha-carbonic anhydrase family. Requires Zn(2+) as cofactor.

The protein resides in the cytoplasm. It carries out the reaction hydrogencarbonate + H(+) = CO2 + H2O. Catalyzes the reversible hydration of carbon dioxide. The chain is Carbonic anhydrase 2 (ca2) from Pseudaspius hakonensis (Big-scaled redfin).